A 320-amino-acid polypeptide reads, in one-letter code: Glutathione synthetase (320 aa).

The 186-residue stretch at 130 to 315 folds into the ATP-grasp domain; it reads KIFISWFSRF…ITGILIDYIE (186 aa). 156–212 serves as a coordination point for ATP; it reads WKEKNDIILKPLDAMGGKGVFRIKKDDPNFSVIVETLTNYEKKYCMIQTYLPEVQFG. The Mg(2+) site is built by Glu286 and Asn288.

The protein belongs to the prokaryotic GSH synthase family. The cofactor is Mg(2+). Requires Mn(2+) as cofactor.

It catalyses the reaction gamma-L-glutamyl-L-cysteine + glycine + ATP = glutathione + ADP + phosphate + H(+). It participates in sulfur metabolism; glutathione biosynthesis; glutathione from L-cysteine and L-glutamate: step 2/2. The chain is Glutathione synthetase from Buchnera aphidicola subsp. Schizaphis graminum (strain Sg).